The sequence spans 360 residues: Photosystem II protein D1 3 (360 aa).

3 helical membrane passes run 29–46 (YVGW…AATI), 118–133 (HFLI…EWEL), and 142–156 (WICV…AATA). His-118 contacts chlorophyll a. A pheophytin a-binding site is contributed by Tyr-126. The [CaMn4O5] cluster site is built by Asp-170 and Glu-189. Residues 197–218 (FHQLGVAGVFGGALFSAMHGSL) traverse the membrane as a helical segment. His-198 provides a ligand contact to chlorophyll a. A quinone-binding positions include His-215 and 264–265 (SF). Fe cation is bound at residue His-215. His-272 lines the Fe cation pocket. The chain crosses the membrane as a helical span at residues 274–288 (FLAAWPVIGIWFTAL). [CaMn4O5] cluster contacts are provided by His-332, Glu-333, Asp-342, and Ala-344. A propeptide spanning residues 345–360 (SAESAPVAMIAPSING) is cleaved from the precursor.

The protein belongs to the reaction center PufL/M/PsbA/D family. As to quaternary structure, PSII is composed of 1 copy each of membrane proteins PsbA, PsbB, PsbC, PsbD, PsbE, PsbF, PsbH, PsbI, PsbJ, PsbK, PsbL, PsbM, PsbT, PsbX, PsbY, PsbZ, Psb30/Ycf12, peripheral proteins PsbO, CyanoQ (PsbQ), PsbU, PsbV and a large number of cofactors. It forms dimeric complexes. Precursor protein interacts with Ycf48. The D1/D2 heterodimer binds P680, chlorophylls that are the primary electron donor of PSII, and subsequent electron acceptors. It shares a non-heme iron and each subunit binds pheophytin, quinone, additional chlorophylls, carotenoids and lipids. D1 provides most of the ligands for the Mn4-Ca-O5 cluster of the oxygen-evolving complex (OEC). There is also a Cl(-1) ion associated with D1 and D2, which is required for oxygen evolution. The PSII complex binds additional chlorophylls, carotenoids and specific lipids. is required as a cofactor. In terms of processing, C-terminally processed by CtpA; processing is essential to allow assembly of the oxygen-evolving complex and thus photosynthetic growth. Post-translationally, tyr-161 forms a radical intermediate that is referred to as redox-active TyrZ, YZ or Y-Z.

Its subcellular location is the cellular thylakoid membrane. The enzyme catalyses 2 a plastoquinone + 4 hnu + 2 H2O = 2 a plastoquinol + O2. In terms of biological role, photosystem II (PSII) is a light-driven water:plastoquinone oxidoreductase that uses light energy to abstract electrons from H(2)O, generating O(2) and a proton gradient subsequently used for ATP formation. It consists of a core antenna complex that captures photons, and an electron transfer chain that converts photonic excitation into a charge separation. The D1/D2 (PsbA/PsbD) reaction center heterodimer binds P680, the primary electron donor of PSII as well as several subsequent electron acceptors. The protein is Photosystem II protein D1 3 of Thermosynechococcus vestitus (strain NIES-2133 / IAM M-273 / BP-1).